Consider the following 245-residue polypeptide: tRNA1(Val) (adenine(37)-N6)-methyltransferase (245 aa).

The protein belongs to the methyltransferase superfamily. tRNA (adenine-N(6)-)-methyltransferase family.

The protein localises to the cytoplasm. The catalysed reaction is adenosine(37) in tRNA1(Val) + S-adenosyl-L-methionine = N(6)-methyladenosine(37) in tRNA1(Val) + S-adenosyl-L-homocysteine + H(+). Specifically methylates the adenine in position 37 of tRNA(1)(Val) (anticodon cmo5UAC). In Salmonella paratyphi A (strain ATCC 9150 / SARB42), this protein is tRNA1(Val) (adenine(37)-N6)-methyltransferase.